Consider the following 332-residue polypeptide: Tsukubadiene synthase (332 aa).

Residues Asp-75 and Glu-80 each contribute to the Mg(2+) site. A DDXXXE motif motif is present at residues 75–80; that stretch reads DDHLDE. Substrate is bound at residue Arg-165. The Mg(2+) site is built by Ser-212, Ser-216, and Glu-220. The SXXXSXXXE motif motif lies at 212 to 220; that stretch reads SDLHSFQLE. 298–299 is a binding site for substrate; it reads RY.

It belongs to the terpene synthase family. Mg(2+) is required as a cofactor.

It catalyses the reaction (2E,6E,10E)-geranylgeranyl diphosphate = tsukubadiene + diphosphate. Its function is as follows. Catalyzes the formation of the 5-9-5 ring skeleton (3S,6S,11R,14S)-tsukubadiene from geranylgeranyl diphosphate (GGPP) via a 1,11-cyclization and a 10Re,14Re-cyclization. The sequence is that of Tsukubadiene synthase from Streptomyces tsukubensis (strain DSM 42081 / NBRC 108919 / NRRL 18488 / 9993).